The following is a 260-amino-acid chain: BTB/POZ domain-containing protein KCTD21 (260 aa).

Residues 3–72 (DPITLNVGGK…LRTSHLDLPE (70 aa)) form the BTB domain. Positions 88-112 (QVQPLIEALQEKEVELSKAEKNAML) form a coiled coil.

In terms of assembly, homopentamer. Interacts with KCTD11; KCTD21 and KCTD11 may associate in pentameric assemblies. Interacts (via BTB domain) with CUL3; indicative for a participation in a BCR (BTB-CUL3-RBX1) E3 ubiquitin-protein ligase complex. Highly expressed in cerebellum and brain. Expressed in adult cerebellum (at protein level).

It participates in protein modification; protein ubiquitination. Its function is as follows. Probable substrate-specific adapter of a BCR (BTB-CUL3-RBX1) E3 ubiquitin-protein ligase complex mediating the ubiquitination and subsequent proteasomal degradation of target proteins. Promotes the ubiquitination of HDAC1. Can function as antagonist of the Hedgehog pathway by affecting the nuclear transfer of transcription factor GLI1; the function probably occurs via HDAC1 down-regulation, keeping GLI1 acetylated and inactive. Inhibits cell growth and tumorigenicity of medulloblastoma (MDB). This chain is BTB/POZ domain-containing protein KCTD21 (Kctd21), found in Mus musculus (Mouse).